The sequence spans 192 residues: Large ribosomal subunit protein uL5 (192 aa).

This sequence belongs to the universal ribosomal protein uL5 family. In terms of assembly, part of the 50S ribosomal subunit; part of the 5S rRNA/L5/L18/L25 subcomplex. Contacts the 5S rRNA and the P site tRNA. Forms a bridge to the 30S subunit in the 70S ribosome.

Functionally, this is one of the proteins that bind and probably mediate the attachment of the 5S RNA into the large ribosomal subunit, where it forms part of the central protuberance. In the 70S ribosome it contacts protein S13 of the 30S subunit (bridge B1b), connecting the 2 subunits; this bridge is implicated in subunit movement. Contacts the P site tRNA; the 5S rRNA and some of its associated proteins might help stabilize positioning of ribosome-bound tRNAs. The polypeptide is Large ribosomal subunit protein uL5 (Paenarthrobacter aurescens (strain TC1)).